We begin with the raw amino-acid sequence, 312 residues long: Ribosomal protein L11 methyltransferase (312 aa).

S-adenosyl-L-methionine-binding residues include threonine 163, glycine 184, aspartate 206, and asparagine 248.

This sequence belongs to the methyltransferase superfamily. PrmA family.

Its subcellular location is the cytoplasm. It catalyses the reaction L-lysyl-[protein] + 3 S-adenosyl-L-methionine = N(6),N(6),N(6)-trimethyl-L-lysyl-[protein] + 3 S-adenosyl-L-homocysteine + 3 H(+). Functionally, methylates ribosomal protein L11. The polypeptide is Ribosomal protein L11 methyltransferase (Clostridium botulinum (strain Hall / ATCC 3502 / NCTC 13319 / Type A)).